A 33-amino-acid chain; its full sequence is Alpha-amanitin proprotein 2 (33 aa).

The propeptide occupies 1 to 10 (MSDINATRLP). At isoleucine 11 the chain carries (3R,4R)-4,5-dihydroxyisoleucine; in form alpha-amanitin. Isoleucine 11 bears the (3R,4S)-4-hydroxyisoleucine; in form gamma-amanitin mark. Residues 11–18 (IWGIGCNP) constitute a cross-link (cyclopeptide (Ile-Pro)). The segment at residues 12 to 16 (WGIGC) is a cross-link (2'-cysteinyl-6'-hydroxytryptophan sulfoxide (Trp-Cys)). Proline 18 carries the 4-hydroxyproline modification. Positions 19–33 (CVGDDVTSVLTRGEA) are excised as a propeptide.

The protein belongs to the MSDIN fungal toxin family. Processed by the macrocyclase-peptidase enzyme POPB to yield a toxic cyclic octapeptide. POPB first removes 10 residues from the N-terminus. Conformational trapping of the remaining peptide forces the enzyme to release this intermediate rather than proceed to macrocyclization. The enzyme rebinds the remaining peptide in a different conformation and catalyzes macrocyclization of the N-terminal 8 residues. Expressed in basidiocarps.

Its function is as follows. Major toxin belonging to the bicyclic octapeptides amatoxins that acts by binding non-competitively to RNA polymerase II and greatly slowing the elongation of transcripts from target promoters. The chain is Alpha-amanitin proprotein 2 from Amanita exitialis (Guangzhou destroying angel).